The chain runs to 163 residues: Sperm surface protein Sp17 (163 aa).

2 disordered regions span residues 57–115 (PAEW…EKEE) and 129–163 (VARE…THEK). 2 stretches are compositionally biased toward basic and acidic residues: residues 62 to 98 (SKVE…KEEE) and 129 to 139 (VAREEVKKMKT). The region spanning 114–143 (EEVAAVKIQAAFRGHVAREEVKKMKTDSLQ) is the IQ domain. Residues 153–163 (DTGFTSRTHEK) are compositionally biased toward polar residues.

As to quaternary structure, homodimer. May interact with ROPN1. Testis- and sperm-specific.

It is found in the membrane. Functionally, sperm surface zona pellucida binding protein. Helps to bind spermatozoa to the zona pellucida with high affinity. Might function in binding zona pellucida and carbohydrates. The sequence is that of Sperm surface protein Sp17 (SPA17) from Papio hamadryas (Hamadryas baboon).